The following is a 656-amino-acid chain: F-box/LRR-repeat protein 10 (656 aa).

An F-box domain is found at 20 to 66 (ERSLDLLPAALLETIMTKLDVASLCSLASTCKTLKSCVTRVLTFTPN). LRR repeat units follow at residues 71-96 (NVSLSMETVRPLLFPNQQLSSLKLDC), 120-145 (CRDFSGDLISEIGRKCKDLRLLCLGS), 151-176 (GRSISRCALEDLLNGCSHLEVLALMF), 194-221 (SDRLTHLELGHITSRMMTQLLTSTEISG), 243-268 (VDCITDAVVKAISKSLPSLIDLDIRD), 277-301 (VSDLTDFGLHEINQNGKLKHLSLIR), 310-335 (FRRVSDQGMLFLADKCLGMETICLGG), 336-361 (FCRVTDAGFKTILHSCASLSKFSIYH), 362-387 (GPKLTDLVFHDILATTLSLSHVSLRR), 388-412 (CHLLTDHAIQKLASSLKLENLDLRG), 413-437 (CRNLRDETLTAVSHLPKLKVLLLDG), 439-463 (DISDTGLSYLKEGVLDSLVSLSVRG), 464-491 (CRNLTDKFMSTLFDGSSKLALRELDLSN), 492-517 (LPNLTDAAIFALAKSGAPITKLQLRE), 518-551 (CRLIGDASVMALASTRVYEDECPGSSLCLLDLYD), and 552-578 (CGGITQLSFKWLKKPFFPRLKWLGITG). Residues 632–656 (ILGDEGDVEMEDAEDESEEDASEED) are disordered.

This Arabidopsis thaliana (Mouse-ear cress) protein is F-box/LRR-repeat protein 10 (FBL10).